Reading from the N-terminus, the 379-residue chain is Protein RecA (379 aa).

The segment at 1–23 is disordered; that stretch reads MSVDVKSAQSSKSDSLQVEPRPG. Polar residues predominate over residues 7-16; that stretch reads SAQSSKSDSL. Position 84–91 (84–91) interacts with ATP; it reads GPESSGKT.

Belongs to the RecA family.

Its subcellular location is the cytoplasm. Functionally, can catalyze the hydrolysis of ATP in the presence of single-stranded DNA, the ATP-dependent uptake of single-stranded DNA by duplex DNA, and the ATP-dependent hybridization of homologous single-stranded DNAs. It interacts with LexA causing its activation and leading to its autocatalytic cleavage. The chain is Protein RecA from Prochlorococcus marinus (strain MIT 9313).